A 131-amino-acid polypeptide reads, in one-letter code: Large-conductance mechanosensitive channel (131 aa).

Helical transmembrane passes span 21–41 (VGVI…ADVI) and 76–96 (GMFI…FLMI).

Belongs to the MscL family. In terms of assembly, homopentamer.

The protein resides in the cell inner membrane. In terms of biological role, channel that opens in response to stretch forces in the membrane lipid bilayer. May participate in the regulation of osmotic pressure changes within the cell. This Histophilus somni (strain 129Pt) (Haemophilus somnus) protein is Large-conductance mechanosensitive channel.